The primary structure comprises 130 residues: Histone H2A type 1-D (130 aa).

The disordered stretch occupies residues 1–22 (MSGRGKQGGKARAKAKTRSSRA). S2 bears the N-acetylserine mark. Phosphoserine; by RPS6KA5 is present on S2. A Citrulline; alternate modification is found at R4. At R4 the chain carries Symmetric dimethylarginine; by PRMT5; alternate. N6-(2-hydroxyisobutyryl)lysine; alternate is present on residues K6 and K10. K6 carries the post-translational modification N6-acetyllysine; alternate. Residues 7 to 19 (QGGKARAKAKTRS) are compositionally biased toward basic residues. An N6-(beta-hydroxybutyryl)lysine; alternate mark is found at K10 and K14. Position 10 is an N6-lactoyllysine; alternate (K10). Residue K10 is modified to N6-succinyllysine; alternate. Residue K14 forms a Glycyl lysine isopeptide (Lys-Gly) (interchain with G-Cter in ubiquitin); alternate linkage. Residue K16 forms a Glycyl lysine isopeptide (Lys-Gly) (interchain with G-Cter in ubiquitin) linkage. The residue at position 37 (K37) is an N6-(2-hydroxyisobutyryl)lysine; alternate. Residue K37 is modified to N6-(beta-hydroxybutyryl)lysine; alternate. K37 carries the N6-crotonyllysine; alternate modification. K75 and K76 each carry N6-(2-hydroxyisobutyryl)lysine. At K96 the chain carries N6-(2-hydroxyisobutyryl)lysine; alternate. Position 96 is an N6-(beta-hydroxybutyryl)lysine; alternate (K96). Position 96 is an N6-succinyllysine; alternate (K96). K96 carries the post-translational modification N6-glutaryllysine; alternate. Residue K100 is modified to N6-glutaryllysine. An N5-methylglutamine modification is found at Q105. The residue at position 119 (K119) is an N6-(2-hydroxyisobutyryl)lysine; alternate. K119 carries the post-translational modification N6-(beta-hydroxybutyryl)lysine; alternate. An N6-crotonyllysine; alternate mark is found at K119 and K120. An N6-glutaryllysine; alternate mark is found at K119 and K120. K120 is covalently cross-linked (Glycyl lysine isopeptide (Lys-Gly) (interchain with G-Cter in ubiquitin); alternate). T121 is modified (phosphothreonine; by DCAF1). An N6-crotonyllysine; alternate modification is found at K126. K126 carries the post-translational modification N6-glutaryllysine; alternate.

It belongs to the histone H2A family. The nucleosome is a histone octamer containing two molecules each of H2A, H2B, H3 and H4 assembled in one H3-H4 heterotetramer and two H2A-H2B heterodimers. The octamer wraps approximately 147 bp of DNA. In terms of processing, deiminated on Arg-4 in granulocytes upon calcium entry. Monoubiquitination of Lys-120 (H2AK119Ub) by RING1, TRIM37 and RNF2/RING2 complex gives a specific tag for epigenetic transcriptional repression and participates in X chromosome inactivation of female mammals. It is involved in the initiation of both imprinted and random X inactivation. Ubiquitinated H2A is enriched in inactive X chromosome chromatin. Ubiquitination of H2A functions downstream of methylation of 'Lys-27' of histone H3 (H3K27me). H2AK119Ub by RNF2/RING2 can also be induced by ultraviolet and may be involved in DNA repair. Monoubiquitination of Lys-120 (H2AK119Ub) by TRIM37 may promote transformation of cells in a number of breast cancers. Following DNA double-strand breaks (DSBs), it is ubiquitinated through 'Lys-63' linkage of ubiquitin moieties by the E2 ligase UBE2N and the E3 ligases RNF8 and RNF168, leading to the recruitment of repair proteins to sites of DNA damage. Ubiquitination at Lys-14 and Lys-16 (H2AK13Ub and H2AK15Ub, respectively) in response to DNA damage is initiated by RNF168 that mediates monoubiquitination at these 2 sites, and 'Lys-63'-linked ubiquitin are then conjugated to monoubiquitin; RNF8 is able to extend 'Lys-63'-linked ubiquitin chains in vitro. Deubiquitinated by USP51 at Lys-14 and Lys-16 (H2AK13Ub and H2AK15Ub, respectively) after damaged DNA is repaired. H2AK119Ub and ionizing radiation-induced 'Lys-63'-linked ubiquitination (H2AK13Ub and H2AK15Ub) are distinct events. Post-translationally, phosphorylation on Ser-2 (H2AS1ph) is enhanced during mitosis. Phosphorylation on Ser-2 by RPS6KA5/MSK1 directly represses transcription. Acetylation of H3 inhibits Ser-2 phosphorylation by RPS6KA5/MSK1. Phosphorylation at Thr-121 (H2AT120ph) by DCAF1 is present in the regulatory region of many tumor suppresor genes and down-regulates their transcription. In terms of processing, glutamine methylation at Gln-105 (H2AQ104me) by FBL is specifically dedicated to polymerase I. It is present at 35S ribosomal DNA locus and impairs binding of the FACT complex. Symmetric dimethylation on Arg-4 by the PRDM1/PRMT5 complex may play a crucial role in the germ-cell lineage. Post-translationally, crotonylation (Kcr) is specifically present in male germ cells and marks testis-specific genes in post-meiotic cells, including X-linked genes that escape sex chromosome inactivation in haploid cells. Crotonylation marks active promoters and enhancers and confers resistance to transcriptional repressors. It is also associated with post-meiotically activated genes on autosomes. In terms of processing, lactylated in macrophages by EP300/P300 by using lactoyl-CoA directly derived from endogenous or exogenous lactate, leading to stimulates gene transcription.

The protein localises to the nucleus. Its subcellular location is the chromosome. In terms of biological role, core component of nucleosome. Nucleosomes wrap and compact DNA into chromatin, limiting DNA accessibility to the cellular machineries which require DNA as a template. Histones thereby play a central role in transcription regulation, DNA repair, DNA replication and chromosomal stability. DNA accessibility is regulated via a complex set of post-translational modifications of histones, also called histone code, and nucleosome remodeling. The chain is Histone H2A type 1-D from Homo sapiens (Human).